Here is a 206-residue protein sequence, read N- to C-terminus: Outer-membrane lipoprotein carrier protein (206 aa).

A signal peptide spans 1 to 21 (MKKLLCAVLLSPLLYSNAVLA).

It belongs to the LolA family. In terms of assembly, monomer.

It is found in the periplasm. Participates in the translocation of lipoproteins from the inner membrane to the outer membrane. Only forms a complex with a lipoprotein if the residue after the N-terminal Cys is not an aspartate (The Asp acts as a targeting signal to indicate that the lipoprotein should stay in the inner membrane). This is Outer-membrane lipoprotein carrier protein from Shewanella sp. (strain MR-7).